The chain runs to 213 residues: Large ribosomal subunit protein uL1 (213 aa).

It belongs to the universal ribosomal protein uL1 family. Part of the 50S ribosomal subunit.

Binds directly to 23S rRNA. Probably involved in E site tRNA release. Functionally, protein L1 is also a translational repressor protein, it controls the translation of its operon by binding to its mRNA. In Picrophilus torridus (strain ATCC 700027 / DSM 9790 / JCM 10055 / NBRC 100828 / KAW 2/3), this protein is Large ribosomal subunit protein uL1.